Here is a 204-residue protein sequence, read N- to C-terminus: N-(5'-phosphoribosyl)anthranilate isomerase (204 aa).

It belongs to the TrpF family.

It carries out the reaction N-(5-phospho-beta-D-ribosyl)anthranilate = 1-(2-carboxyphenylamino)-1-deoxy-D-ribulose 5-phosphate. It participates in amino-acid biosynthesis; L-tryptophan biosynthesis; L-tryptophan from chorismate: step 3/5. This chain is N-(5'-phosphoribosyl)anthranilate isomerase, found in Bacillus cereus (strain ZK / E33L).